We begin with the raw amino-acid sequence, 99 residues long: MAEPGIDKLFGMVDSKYRLTVVVAKRAQQLLRHGFKNTVLEPEERPKMQTLEGLFDDPNAVTWAMKELLTGRLVFGENLVPEDRLQKEMERLYPVEREE.

Belongs to the RNA polymerase subunit omega family. The RNAP catalytic core consists of 2 alpha, 1 beta, 1 beta' and 1 omega subunit. When a sigma factor is associated with the core the holoenzyme is formed, which can initiate transcription.

The enzyme catalyses RNA(n) + a ribonucleoside 5'-triphosphate = RNA(n+1) + diphosphate. Promotes RNA polymerase assembly. Latches the N- and C-terminal regions of the beta' subunit thereby facilitating its interaction with the beta and alpha subunits. This is DNA-directed RNA polymerase subunit omega from Thermus thermophilus (strain ATCC BAA-163 / DSM 7039 / HB27).